The sequence spans 215 residues: Redox-sensing transcriptional repressor Rex (215 aa).

Positions 18–57 form a DNA-binding region, H-T-H motif; it reads LYYRFLKNLHASGKQRVSSAELSDAVKVDSATIRRDFSYF. 92-97 serves as a coordination point for NAD(+); it reads GVGNLG.

The protein belongs to the transcriptional regulatory Rex family. Homodimer.

Its subcellular location is the cytoplasm. Its function is as follows. Modulates transcription in response to changes in cellular NADH/NAD(+) redox state. The sequence is that of Redox-sensing transcriptional repressor Rex from Bacillus licheniformis (strain ATCC 14580 / DSM 13 / JCM 2505 / CCUG 7422 / NBRC 12200 / NCIMB 9375 / NCTC 10341 / NRRL NRS-1264 / Gibson 46).